Here is a 225-residue protein sequence, read N- to C-terminus: MDKRISIAIDGPAAAGKSTVAKVVAKELSYVYIDTGAMYRTLTYAALEQKVDIENEEQLMEVVRNVNIEFQQGENTQLVFLNGQDVSEVIRTPDVTNRVSIVAKHRLVREEMVRRQQDLAKKGGVVMDGRDIGTHVLPDAEVKIFMLASVEERAERRHLENLNKGFDSNLEQLKEEIAQRDKLDSEREVSPLKKADDALELDTTSLSIEEVVQKIMSIVSGVFAK.

An ATP-binding site is contributed by 11–19 (GPAAAGKST).

The protein belongs to the cytidylate kinase family. Type 1 subfamily.

It is found in the cytoplasm. It catalyses the reaction CMP + ATP = CDP + ADP. It carries out the reaction dCMP + ATP = dCDP + ADP. In Bacillus cereus (strain G9842), this protein is Cytidylate kinase.